The chain runs to 1066 residues: Beta-galactosidase (1066 aa).

2 residues coordinate substrate: Asn110 and Asp209. Asp209 contacts Na(+). The Mg(2+) site is built by Glu432, His434, and Glu477. Substrate-binding positions include Glu477 and 553 to 556 (EYAH). The active-site Proton donor is the Glu477. The Nucleophile role is filled by Glu553. Asn613 is a Mg(2+) binding site. Phe617 and Asn620 together coordinate Na(+). Substrate is bound by residues Asn620 and Trp1041.

Belongs to the glycosyl hydrolase 2 family. In terms of assembly, homotetramer. Requires Mg(2+) as cofactor. The cofactor is Na(+).

The enzyme catalyses Hydrolysis of terminal non-reducing beta-D-galactose residues in beta-D-galactosides.. This is Beta-galactosidase from Yersinia pseudotuberculosis serotype IB (strain PB1/+).